The sequence spans 531 residues: Jacalin-related lectin 16 (531 aa).

Jacalin-type lectin domains follow at residues 1–87 (MDRS…YFTW), 90–232 (PTKM…YFTT), 235–378 (LISL…YFRP), and 385–528 (TEKV…NVLP).

It belongs to the jacalin lectin family.

In Arabidopsis thaliana (Mouse-ear cress), this protein is Jacalin-related lectin 16 (JAL16).